Reading from the N-terminus, the 384-residue chain is MSSYLFTSESVSEGHPDKIADQISDAVLDEILKQDPKARVACETYVKTGMALVGGEITTSAWVDIENLTRKVICDIGYEHSEMGFDGHSCAVLNAIGKQSADINQGVDRENPLDQGAGDQGIMFGYATNETDVLMPAAITYAHRLMEKQAEVRKSGKLAWLRPDAKSQVTLKYEDNKIVGVDAVVLSTQHSEEVSQKDLHEGVMEEIIKPVLPSEWLSKETKFFINPTGRFVIGGPMGDCGLTGRKIIVDTYGGAARHGGGAFSGKDPSKVDRSAAYAARYVAKNIVAAGLADRCEIQLSYAIGVADPTSIMVETFGTGKVANELLVSLVREFFDLRPYGLIKMLDLIQPIYRETAAYGHFGREQFPWEKVDRAEDLRVAAGLK.

Histidine 15 is a binding site for ATP. Aspartate 17 serves as a coordination point for Mg(2+). A K(+)-binding site is contributed by glutamate 43. L-methionine-binding residues include glutamate 56 and glutamine 99. The segment at 99 to 109 (QSADINQGVDR) is flexible loop. Residues 164 to 166 (DAK), 230 to 231 (RF), aspartate 239, 245 to 246 (RK), alanine 262, and lysine 266 each bind ATP. Residue aspartate 239 participates in L-methionine binding. Lysine 270 is a binding site for L-methionine.

Belongs to the AdoMet synthase family. As to quaternary structure, homotetramer; dimer of dimers. Mg(2+) is required as a cofactor. The cofactor is K(+).

It is found in the cytoplasm. It carries out the reaction L-methionine + ATP + H2O = S-adenosyl-L-methionine + phosphate + diphosphate. It functions in the pathway amino-acid biosynthesis; S-adenosyl-L-methionine biosynthesis; S-adenosyl-L-methionine from L-methionine: step 1/1. Catalyzes the formation of S-adenosylmethionine (AdoMet) from methionine and ATP. The overall synthetic reaction is composed of two sequential steps, AdoMet formation and the subsequent tripolyphosphate hydrolysis which occurs prior to release of AdoMet from the enzyme. The sequence is that of S-adenosylmethionine synthase from Haemophilus influenzae (strain PittGG).